The primary structure comprises 545 residues: Chaperonin GroEL 3 (545 aa).

Residues 30-33, Lys51, 87-91, Gly415, and Asp496 contribute to the ATP site; these read TLGP and DGTTT.

This sequence belongs to the chaperonin (HSP60) family. In terms of assembly, forms a cylinder of 14 subunits composed of two heptameric rings stacked back-to-back. Interacts with the co-chaperonin GroES.

The protein localises to the cytoplasm. It carries out the reaction ATP + H2O + a folded polypeptide = ADP + phosphate + an unfolded polypeptide.. Together with its co-chaperonin GroES, plays an essential role in assisting protein folding. The GroEL-GroES system forms a nano-cage that allows encapsulation of the non-native substrate proteins and provides a physical environment optimized to promote and accelerate protein folding. This Nitrobacter hamburgensis (strain DSM 10229 / NCIMB 13809 / X14) protein is Chaperonin GroEL 3.